Consider the following 200-residue polypeptide: Probable GTP-binding protein EngB (200 aa).

The region spanning 26–200 is the EngB-type G domain; that stretch reads SIPEVALAGR…IYEIAQCIKK (175 aa). Residues 34-41, 61-65, 80-83, 147-150, and 179-181 each bind GTP; these read GRSNVGKS, GCTRQ, DLPG, TKID, and VSS. Residues Ser41 and Thr63 each contribute to the Mg(2+) site.

It belongs to the TRAFAC class TrmE-Era-EngA-EngB-Septin-like GTPase superfamily. EngB GTPase family. The cofactor is Mg(2+).

In terms of biological role, necessary for normal cell division and for the maintenance of normal septation. In Ehrlichia ruminantium (strain Gardel), this protein is Probable GTP-binding protein EngB.